A 475-amino-acid polypeptide reads, in one-letter code: Divinyl ether synthase CYP74M1 (475 aa).

Cys427 provides a ligand contact to heme.

It belongs to the cytochrome P450 family. Heme serves as cofactor.

It catalyses the reaction (13S)-hydroperoxy-(9Z,11E)-octadecadienoate = etheroleate + H2O. It carries out the reaction (13S)-hydroperoxy-(9Z,11E,15Z)-octadecatrienoate = etherolenate + H2O. It functions in the pathway lipid metabolism; oxylipin biosynthesis. In terms of biological role, divinyl ether synthase involved in oxylipin biosynthesis. Catalyzes the conversion of (13S)-hydroperoxy-(9Z,11E)-octadecadienoate (13-HPOD) to etheroleate and (13S)-hydroperoxy-(9Z,11E,15Z)-octadecatrienoate (13-HPOT) to etherolenate. Has no activity with the corresponding 9-hydroperoxides (9-HPOD and 9-HPOT). The polypeptide is Divinyl ether synthase CYP74M1 (Selaginella moellendorffii (Spikemoss)).